The primary structure comprises 100 residues: Large ribosomal subunit protein uL23 (100 aa).

This sequence belongs to the universal ribosomal protein uL23 family. As to quaternary structure, part of the 50S ribosomal subunit. Contacts protein L29, and trigger factor when it is bound to the ribosome.

Functionally, one of the early assembly proteins it binds 23S rRNA. One of the proteins that surrounds the polypeptide exit tunnel on the outside of the ribosome. Forms the main docking site for trigger factor binding to the ribosome. The polypeptide is Large ribosomal subunit protein uL23 (Pseudothermotoga lettingae (strain ATCC BAA-301 / DSM 14385 / NBRC 107922 / TMO) (Thermotoga lettingae)).